A 165-amino-acid polypeptide reads, in one-letter code: Transmembrane protein 128 (165 aa).

Helical transmembrane passes span 49 to 69, 81 to 101, 119 to 139, and 144 to 164; these read NIHSGFWILASIVVTYYVDFF, WFLCGSALLLVSLSIAFYCIV, LIPITTASFIAAGICFNIALW, and FFTPLLLFTQFMGVVMFITLL.

The protein localises to the membrane. In Homo sapiens (Human), this protein is Transmembrane protein 128 (TMEM128).